A 616-amino-acid polypeptide reads, in one-letter code: Chaperone protein HscA homolog (616 aa).

Belongs to the heat shock protein 70 family.

Its function is as follows. Chaperone involved in the maturation of iron-sulfur cluster-containing proteins. Has a low intrinsic ATPase activity which is markedly stimulated by HscB. The protein is Chaperone protein HscA homolog of Aliivibrio fischeri (strain MJ11) (Vibrio fischeri).